The following is a 175-amino-acid chain: MSLREIIILPDRQLRLVSKPVEKVTPEIRQLVDDMFQTMYDAPGIGLAAIQVAQPLRVITMDLAKPDSGGETKREPRVFINPEIIAKSDELSVYEEGCLSIPEYYEEVERPARVRVRFTDLDGVVREEDAEGLYATCIQHEIDHLNGVLFIDYLSKLKRDRVMKKFTKAAKRAGE.

2 residues coordinate Fe cation: Cys98 and His140. The active site involves Glu141. Residue His144 participates in Fe cation binding.

It belongs to the polypeptide deformylase family. Fe(2+) is required as a cofactor.

The catalysed reaction is N-terminal N-formyl-L-methionyl-[peptide] + H2O = N-terminal L-methionyl-[peptide] + formate. Functionally, removes the formyl group from the N-terminal Met of newly synthesized proteins. Requires at least a dipeptide for an efficient rate of reaction. N-terminal L-methionine is a prerequisite for activity but the enzyme has broad specificity at other positions. This Bradyrhizobium sp. (strain ORS 278) protein is Peptide deformylase.